Consider the following 43-residue polypeptide: Iota-conotoxin-like S11.2 (43 aa).

4 cysteine pairs are disulfide-bonded: Cys-2–Cys-16, Cys-9–Cys-19, Cys-15–Cys-24, and Cys-18–Cys-35. Met-41 carries the D-methionine modification. Residue Arg-43 is a propeptide, removed by a carboxypeptidase.

Belongs to the conotoxin I1 superfamily. As to expression, expressed by the venom duct.

It is found in the secreted. Functionally, iota-conotoxins bind to voltage-gated sodium channels (Nav) and act as agonists by shifting the voltage-dependence of activation to more hyperpolarized levels. Produces general excitatory symptoms. The sequence is that of Iota-conotoxin-like S11.2 from Conus striatus (Striated cone).